A 2664-amino-acid chain; its full sequence is Non-reducing polyketide synthase sorB (2664 aa).

Residues 21 to 45 (KSAPQSGNTADDIPNAASQPDTTST) form a disordered region. Positions 36-45 (AASQPDTTST) are enriched in polar residues. The tract at residues 112–281 (ADHARRLAEW…TTPSRIASDL (170 aa)) is N-terminal acylcarrier protein transacylase domain (SAT). Cys-184 serves as the catalytic Nucleophile; for transacylase activity. His-302 acts as the Proton donor/acceptor; for transacylase activity in catalysis. The Ketosynthase family 3 (KS3) domain maps to 428 to 849 (DNDIAVIGMS…GSNASMVIKQ (422 aa)). Active-site for beta-ketoacyl synthase activity residues include Cys-596, His-731, and His-772. Residues 961-1276 (CFGGQVSKSV…TQGTRQLADV (316 aa)) form a malonyl-CoA:ACP transacylase (MAT) domain region. Residues 1345 to 1477 (PGLYTFMGYG…GQLEFHRADD (133 aa)) are N-terminal hotdog fold. In terms of domain architecture, PKS/mFAS DH spans 1345–1663 (PGLYTFMGYG…FSARSMSELF (319 aa)). A product template (PT) domain region spans residues 1376–1548 (VSGYTLGKTV…PSESAGRAVK (173 aa)). Residues 1507–1663 (DEVIQGQSIY…FSARSMSELF (157 aa)) form a C-terminal hotdog fold region. The Carrier domain maps to 1711-1785 (TELWAKLLPV…GILAFLQSTL (75 aa)). Ser-1745 bears the O-(pantetheine 4'-phosphoryl)serine mark. Positions 1789–1820 (GEDDASQSSDAASSSRNTPPSSNDGILATPSP) are disordered. Low complexity predominate over residues 1794–1803 (SQSSDAASSS). A methyltransferase domain region spans residues 2015-2197 (FQLMADFLSR…DAGYKHVEWT (183 aa)). The NADPH-binding (R) domain stretch occupies residues 2281–2526 (VTGTTGSLGS…TLRSFPAVEG (246 aa)).

Requires pantetheine 4'-phosphate as cofactor.

Its pathway is secondary metabolite biosynthesis. Functionally, non-reducing polyketide synthase; part of the gene cluster that mediates the biosynthesis of sorbicillinoids, a diverse group of yellow secondary metabolites that restrict growth of competing pathogenic fungi but not of bacteria. Sorbicillinoids biosynthesis requires the action of two PKSs. SorA iteratively combines three acetyl units and the growing chain is modified by the ketoacyl reductase subunit, and optional by the enoyl reductase subunit in the second cycle. The polyketide is then handed over to the PKS SorB, which adds three more acetyl units, and two methyl groups. SorB releases an aldehyde, which undergoes spontaneous cyclization resulting in the formation of sorbicillin or 2',3'-dihydrosorbicillin. The monooxygenase sorC oxidizes sorbicillin and 2',3'-dihydrosorbicillin to 2',3'-dihydrosorbicillinol and sorbicillinol, respectively. The oxidoreductase sorD further converts sorbicillinol into oxosorbicillinol. Sorbicillinol is the building block for the other sorbicillinoids such as disorbicillinol, bisvertinolon, and dihydrobisvertinolone. This Penicillium rubens (strain ATCC 28089 / DSM 1075 / NRRL 1951 / Wisconsin 54-1255) (Penicillium chrysogenum) protein is Non-reducing polyketide synthase sorB.